Here is a 142-residue protein sequence, read N- to C-terminus: ATP synthase epsilon chain (142 aa).

The protein belongs to the ATPase epsilon chain family. As to quaternary structure, F-type ATPases have 2 components, CF(1) - the catalytic core - and CF(0) - the membrane proton channel. CF(1) has five subunits: alpha(3), beta(3), gamma(1), delta(1), epsilon(1). CF(0) has three main subunits: a, b and c.

Its subcellular location is the cell inner membrane. Functionally, produces ATP from ADP in the presence of a proton gradient across the membrane. This is ATP synthase epsilon chain from Maridesulfovibrio salexigens (strain ATCC 14822 / DSM 2638 / NCIMB 8403 / VKM B-1763) (Desulfovibrio salexigens).